The following is a 424-amino-acid chain: Serine--tRNA ligase (424 aa).

Residue 230–232 (TAE) coordinates L-serine. Residue 261–263 (RSE) coordinates ATP. Glu-284 contacts L-serine. 348–351 (EISS) lines the ATP pocket. Ser-384 is an L-serine binding site.

This sequence belongs to the class-II aminoacyl-tRNA synthetase family. Type-1 seryl-tRNA synthetase subfamily. As to quaternary structure, homodimer. The tRNA molecule binds across the dimer.

Its subcellular location is the cytoplasm. The catalysed reaction is tRNA(Ser) + L-serine + ATP = L-seryl-tRNA(Ser) + AMP + diphosphate + H(+). It carries out the reaction tRNA(Sec) + L-serine + ATP = L-seryl-tRNA(Sec) + AMP + diphosphate + H(+). It participates in aminoacyl-tRNA biosynthesis; selenocysteinyl-tRNA(Sec) biosynthesis; L-seryl-tRNA(Sec) from L-serine and tRNA(Sec): step 1/1. In terms of biological role, catalyzes the attachment of serine to tRNA(Ser). Is also able to aminoacylate tRNA(Sec) with serine, to form the misacylated tRNA L-seryl-tRNA(Sec), which will be further converted into selenocysteinyl-tRNA(Sec). The sequence is that of Serine--tRNA ligase from Streptococcus pneumoniae (strain JJA).